The primary structure comprises 95 residues: Co-chaperonin GroES (95 aa).

Residues K20–E45 are disordered.

It belongs to the GroES chaperonin family. As to quaternary structure, heptamer of 7 subunits arranged in a ring. Interacts with the chaperonin GroEL.

The protein resides in the cytoplasm. Functionally, together with the chaperonin GroEL, plays an essential role in assisting protein folding. The GroEL-GroES system forms a nano-cage that allows encapsulation of the non-native substrate proteins and provides a physical environment optimized to promote and accelerate protein folding. GroES binds to the apical surface of the GroEL ring, thereby capping the opening of the GroEL channel. This Paracoccus denitrificans protein is Co-chaperonin GroES.